The sequence spans 348 residues: NADH-quinone oxidoreductase subunit H (348 aa).

8 helical membrane passes run 21 to 41 (IAGI…VIYV), 87 to 107 (GIFL…WAVI), 120 to 140 (VGLL…VMAG), 166 to 186 (IGFI…SEIV), 195 to 215 (GIVN…LFFI), 258 to 278 (NILL…LPPI), 288 to 308 (GFLW…WIWA), and 325 to 345 (VFLP…MATG).

The protein belongs to the complex I subunit 1 family. In terms of assembly, NDH-1 is composed of 14 different subunits. Subunits NuoA, H, J, K, L, M, N constitute the membrane sector of the complex.

The protein localises to the cell inner membrane. It carries out the reaction a quinone + NADH + 5 H(+)(in) = a quinol + NAD(+) + 4 H(+)(out). Functionally, NDH-1 shuttles electrons from NADH, via FMN and iron-sulfur (Fe-S) centers, to quinones in the respiratory chain. The immediate electron acceptor for the enzyme in this species is believed to be ubiquinone. Couples the redox reaction to proton translocation (for every two electrons transferred, four hydrogen ions are translocated across the cytoplasmic membrane), and thus conserves the redox energy in a proton gradient. This subunit may bind ubiquinone. This Erythrobacter litoralis (strain HTCC2594) protein is NADH-quinone oxidoreductase subunit H.